The chain runs to 657 residues: ABC1 family protein YPL109C, mitochondrial (657 aa).

Residues 1 to 15 (MSFLKFAYRNSWRYY) constitute a mitochondrion transit peptide.

This sequence belongs to the protein kinase superfamily. ADCK protein kinase family.

The protein localises to the mitochondrion. The sequence is that of ABC1 family protein YPL109C, mitochondrial from Saccharomyces cerevisiae (strain ATCC 204508 / S288c) (Baker's yeast).